The sequence spans 875 residues: Neurotrypsin (875 aa).

The N-terminal stretch at 1–20 is a signal peptide; it reads MTLARFVLALMLGALPEVVG. An N-linked (GlcNAc...) asparagine glycan is attached at asparagine 26. A disordered region spans residues 29-88; that stretch reads LHHSHRHSPPAGPHYPYYLPTQQRPPRTRPPPPLPRFPRPPRALPAQRPHALQAGHTPRP. The segment covering 56–71 has biased composition (pro residues); that stretch reads TRPPPPLPRFPRPPRA. In terms of domain architecture, Kringle spans 93-165; the sequence is CPAGEPWVSV…GKVDWGYCDC (73 aa). Intrachain disulfides connect cysteine 93–cysteine 165, cysteine 109–cysteine 149, cysteine 138–cysteine 163, cysteine 195–cysteine 259, cysteine 208–cysteine 269, cysteine 239–cysteine 249, cysteine 305–cysteine 369, cysteine 318–cysteine 379, cysteine 349–cysteine 359, cysteine 412–cysteine 475, cysteine 425–cysteine 485, cysteine 455–cysteine 465, cysteine 525–cysteine 589, cysteine 538–cysteine 599, cysteine 569–cysteine 579, cysteine 619–cysteine 750, cysteine 661–cysteine 677, cysteine 765–cysteine 831, cysteine 794–cysteine 808, and cysteine 821–cysteine 850. SRCR domains lie at 170–271, 280–381, 387–487, and 500–601; these read VRLR…TCSF, IRLA…SCTP, IRLA…ACYP, and VRLM…ICDY. The interval 619–630 is zymogen activation region; sequence CGLRLLHRRQKR. Positions 631-874 constitute a Peptidase S1 domain; that stretch reads IIGGKNSLRG…FVPWIKSVTK (244 aa). Histidine 676 (charge relay system) is an active-site residue. Asparagine 683 is a glycosylation site (N-linked (GlcNAc...) asparagine). Aspartate 726 acts as the Charge relay system in catalysis. The Charge relay system role is filled by serine 825.

This sequence belongs to the peptidase S1 family. As to expression, brain and Leydig cells of the testis.

The protein resides in the secreted. Functionally, plays a role in neuronal plasticity and the proteolytic action may subserve structural reorganizations associated with learning and memory operations. This Homo sapiens (Human) protein is Neurotrypsin (PRSS12).